A 489-amino-acid polypeptide reads, in one-letter code: Aklavinone 12-hydroxylase DnrF (489 aa).

FAD is bound by residues 17–18 (LG), glutamate 37, glutamine 121, and leucine 145. The Proton acceptor role is filled by tyrosine 224. FAD is bound at residue aspartate 308. Position 317 (glycine 317) interacts with aklavinone. The interval 402–428 (VAAEDDDPEPTEDPRRPSGRPGFRAPH) is disordered.

This sequence belongs to the PheA/TfdB FAD monooxygenase family. As to quaternary structure, monomer. FAD serves as cofactor.

It catalyses the reaction aklavinone + NADPH + O2 + H(+) = epsilon-rhodomycinone + NADP(+) + H2O. It functions in the pathway antibiotic biosynthesis; daunorubicin biosynthesis. Its pathway is antibiotic biosynthesis; carminomycin biosynthesis. It participates in antibiotic biosynthesis; rhodomycin biosynthesis. The protein operates within antibiotic biosynthesis; doxorubicin biosynthesis. Functionally, involved in the biosynthesis of the anthracyclines carminomycin, rhodomycin, daunorubicin (daunomycin) and doxorubicin (adriamycin) which are aromatic polyketide antibiotics that exhibit high cytotoxicity and are widely applied in the chemotherapy of a variety of cancers. Catalyzes the incorporation of a hydroxyl group at position C-11 of aklavinone, resulting in epsilon-rhodomycinone. The sequence is that of Aklavinone 12-hydroxylase DnrF (dnrF) from Streptomyces peucetius subsp. caesius.